The following is a 161-amino-acid chain: Ribosome maturation factor RimP (161 aa).

The protein belongs to the RimP family.

It localises to the cytoplasm. Functionally, required for maturation of 30S ribosomal subunits. This Rickettsia africae (strain ESF-5) protein is Ribosome maturation factor RimP.